The following is a 202-amino-acid chain: Dephospho-CoA kinase (202 aa).

The DPCK domain occupies 6–202 (KVSITGDLSS…EYFYALKGAL (197 aa)). Position 14-19 (14-19 (SSGKTE)) interacts with ATP.

It belongs to the CoaE family.

The protein localises to the cytoplasm. It carries out the reaction 3'-dephospho-CoA + ATP = ADP + CoA + H(+). It functions in the pathway cofactor biosynthesis; coenzyme A biosynthesis; CoA from (R)-pantothenate: step 5/5. In terms of biological role, catalyzes the phosphorylation of the 3'-hydroxyl group of dephosphocoenzyme A to form coenzyme A. This chain is Dephospho-CoA kinase, found in Chlamydia caviae (strain ATCC VR-813 / DSM 19441 / 03DC25 / GPIC) (Chlamydophila caviae).